The following is a 333-amino-acid chain: Alpha-N-acetylgalactosaminide alpha-2,6-sialyltransferase 6 (333 aa).

Positions 1–12 (MACSRPPSQCDP) are enriched in polar residues. Residues 1 to 27 (MACSRPPSQCDPTTLPPGPPAGRWPLP) form a disordered region. The Cytoplasmic portion of the chain corresponds to 1-43 (MACSRPPSQCDPTTLPPGPPAGRWPLPFSRRRREMSSNKEQRS). Residues 44–64 (AVFVILFALITILILYSSNSA) form a helical; Signal-anchor for type II membrane protein membrane-spanning segment. The Lumenal portion of the chain corresponds to 65-333 (NEVFHYGSLR…GITFSHPSWT (269 aa)). An N-linked (GlcNAc...) asparagine glycan is attached at Asn-98. Cys-108 and Cys-256 form a disulfide bridge.

It belongs to the glycosyltransferase 29 family. As to expression, widely expressed, the gene expression is most abundant in colon, brain, liver, and heart.

The protein localises to the golgi apparatus membrane. It carries out the reaction a ganglioside GM1b (d18:1(4E)) + CMP-N-acetyl-beta-neuraminate = a ganglioside GD1alpha (d18:1(4E)) + CMP + H(+). The catalysed reaction is a ganglioside GD1a (d18:1(4E)) + CMP-N-acetyl-beta-neuraminate = a ganglioside GT1aalpha (d18:1(4E)) + CMP + H(+). It catalyses the reaction a ganglioside GT1b (d18:1(4E)) + CMP-N-acetyl-beta-neuraminate = a ganglioside GQ1balpha (d18:1(4E)) + CMP + H(+). The enzyme catalyses N-acetyl-alpha-neuraminosyl-(2-&gt;3)-beta-D-galactosyl-(1-&gt;3)-N-acetyl-beta-D-glucosaminyl-(1-&gt;3)-beta-D-galactosyl-(1-&gt;4)-beta-D-glucosyl-(1&lt;-&gt;1')-N-acyl-sphing-4-enine + CMP-N-acetyl-beta-neuraminate = N-acetyl-alpha-neuraminosyl-(2-&gt;3)-beta-D-galactosyl-(1-&gt;3)-[N-acetyl-alpha-neuraminosyl-(2-&gt;6)]-N-acetyl-beta-D-glucosaminyl-(1-&gt;3)-beta-D-galactosyl-(1-&gt;4)-beta-D-glucosyl-(1&lt;-&gt;1')-N-acyl-sphing-4-enine + CMP + H(+). It carries out the reaction a globoside MSGG + CMP-N-acetyl-beta-neuraminate = a globoside DSGG + CMP + H(+). The catalysed reaction is 3-O-[alpha-Neu5Ac-(2-&gt;3)-beta-D-Gal-(1-&gt;3)-alpha-D-GalNAc]-L-Ser-[protein] + CMP-N-acetyl-beta-neuraminate = a 3-O-{alpha-Neu5Ac-(2-&gt;3)-beta-D-Gal-(1-&gt;3)-[alpha-Neu5Ac-(2-&gt;6)]-alpha-D-GalNAc}-L-seryl-[protein] + CMP + H(+). It catalyses the reaction 3-O-[alpha-Neu5Ac-(2-&gt;3)-beta-D-Gal-(1-&gt;3)-alpha-D-GalNAc]-L-Thr-[protein] + CMP-N-acetyl-beta-neuraminate = a 3-O-{alpha-Neu5Ac-(2-&gt;3)-beta-D-Gal-(1-&gt;3)-[alpha-Neu5Ac-(2-&gt;6)]-alpha-D-GalNAc}-L-threonyl-[protein] + CMP + H(+). In terms of biological role, transfers the sialyl group (N-acetyl-alpha-neuraminyl or NeuAc) from CMP-NeuAc onto glycolipids, forming an alpha-2,6-linkage. Produces branched type disialyl structures by transfer of a sialyl group onto the GalNAc or GlcNAc residue inside backbone core chains having a terminal sialic acid with an alpha-2,3-linkage on Gal. ST6GalNAcVI prefers glycolipids to glycoproteins, predominantly catalyzing the biosynthesis of ganglioside GD1alpha from GM1b. Also has activity toward GD1a and GT1b, and can generate DSGG (disialylgalactosylgloboside) from MSGG (monosialylgalactosylgloboside). Besides GMb1, MSGG and other glycolipids, it shows activity towards sialyl Lc4Cer generating disialyl Lc4Cer, which can lead to the synthesis of disialyl Lewis a (Le(a)), suggested to be a cancer-associated antigen. The chain is Alpha-N-acetylgalactosaminide alpha-2,6-sialyltransferase 6 (St6galnac6) from Mus musculus (Mouse).